The primary structure comprises 480 residues: MTNDTQYKRHKTVLKEESRRTIQINKSWGGRFNEPTDEFVKIFGASIFFDKILAPYDIQGSIAHATMLQEVGLLTENEKNKIIKGLERILSEVKTGEFKWSITLEDIHMNIEARLVKMIGDTGKKLHTGRSRNDQIVTDIRLYLRDQVDDITNEIKRLQLVLADLAEKETNTIMPGFTHLQAAQPISFGHHMMAYFEMLARDVERLFDCRKRINSMPLGSAALAGTTYSIKRTRTAELLGFERICLNSLDGVSDRDFVIEFLSTASIIMMHLSRFSEELILWSSAQFNFIELPDSFCTGSSIMPQKKNPDVPELVRGKTGRVYGNLTSLLTIMKSQPLAYNKDNQEDKEPLFDTVDTLKACLRVFADMIPTIQIKRDNMYNSTKQGYTTATDLADYLVNKGLPFRDAHKVVGKSVAYGIEHQKDLSELSLEELQAFDSRIENDVFEILSLEGSLNARNHLGATSPNQVKQAIKIARKTLK.

It belongs to the lyase 1 family. Argininosuccinate lyase subfamily.

It localises to the cytoplasm. The catalysed reaction is 2-(N(omega)-L-arginino)succinate = fumarate + L-arginine. The protein operates within amino-acid biosynthesis; L-arginine biosynthesis; L-arginine from L-ornithine and carbamoyl phosphate: step 3/3. The protein is Argininosuccinate lyase of Ruthia magnifica subsp. Calyptogena magnifica.